Reading from the N-terminus, the 415-residue chain is Histidine--tRNA ligase (415 aa).

The protein belongs to the class-II aminoacyl-tRNA synthetase family. In terms of assembly, homodimer.

It localises to the cytoplasm. The enzyme catalyses tRNA(His) + L-histidine + ATP = L-histidyl-tRNA(His) + AMP + diphosphate + H(+). This chain is Histidine--tRNA ligase, found in Gluconobacter oxydans (strain 621H) (Gluconobacter suboxydans).